Reading from the N-terminus, the 301-residue chain is Acetyl-coenzyme A carboxylase carboxyl transferase subunit beta (301 aa).

The 270-residue stretch at 25 to 294 (LWIKCPETGE…SAANDMNGGA (270 aa)) folds into the CoA carboxyltransferase N-terminal domain.

It belongs to the AccD/PCCB family. Acetyl-CoA carboxylase is a heterohexamer composed of biotin carboxyl carrier protein (AccB), biotin carboxylase (AccC) and two subunits each of ACCase subunit alpha (AccA) and ACCase subunit beta (AccD).

The protein localises to the cytoplasm. The enzyme catalyses N(6)-carboxybiotinyl-L-lysyl-[protein] + acetyl-CoA = N(6)-biotinyl-L-lysyl-[protein] + malonyl-CoA. Its pathway is lipid metabolism; malonyl-CoA biosynthesis; malonyl-CoA from acetyl-CoA: step 1/1. Its function is as follows. Component of the acetyl coenzyme A carboxylase (ACC) complex. Biotin carboxylase (BC) catalyzes the carboxylation of biotin on its carrier protein (BCCP) and then the CO(2) group is transferred by the transcarboxylase to acetyl-CoA to form malonyl-CoA. The chain is Acetyl-coenzyme A carboxylase carboxyl transferase subunit beta from Rhizobium etli (strain CIAT 652).